The following is a 36-amino-acid chain: Gloverin (36 aa).

It localises to the secreted. Functionally, antibacterial protein. In Heliothis virescens (Tobacco budworm moth), this protein is Gloverin.